The primary structure comprises 268 residues: Glucosamine-6-phosphate deaminase (268 aa).

Aspartate 72 functions as the Proton acceptor; for enolization step in the catalytic mechanism. The active-site For ring-opening step is the aspartate 141. Histidine 143 acts as the Proton acceptor; for ring-opening step in catalysis. Glutamate 148 (for ring-opening step) is an active-site residue.

This sequence belongs to the glucosamine/galactosamine-6-phosphate isomerase family. NagB subfamily.

It carries out the reaction alpha-D-glucosamine 6-phosphate + H2O = beta-D-fructose 6-phosphate + NH4(+). Its pathway is amino-sugar metabolism; N-acetylneuraminate degradation; D-fructose 6-phosphate from N-acetylneuraminate: step 5/5. Allosterically activated by N-acetylglucosamine 6-phosphate (GlcNAc6P). Catalyzes the reversible isomerization-deamination of glucosamine 6-phosphate (GlcN6P) to form fructose 6-phosphate (Fru6P) and ammonium ion. This chain is Glucosamine-6-phosphate deaminase, found in Borreliella afzelii (strain PKo) (Borrelia afzelii).